The chain runs to 371 residues: Carbamoyl phosphate synthase small chain (371 aa).

The interval 1-186 (MDYYNNDTPG…IHQGKTGDVV (186 aa)) is CPSase. Residues S52, G233, and G235 each coordinate L-glutamine. A Glutamine amidotransferase type-1 domain is found at 185-371 (VVVVVDCGIK…KFKKMVVGDA (187 aa)). The active-site Nucleophile is C261. 5 residues coordinate L-glutamine: L262, Q265, N303, G305, and Y306. Active-site residues include H346 and E348.

The protein belongs to the CarA family. Composed of two chains; the small (or glutamine) chain promotes the hydrolysis of glutamine to ammonia, which is used by the large (or ammonia) chain to synthesize carbamoyl phosphate. Tetramer of heterodimers (alpha,beta)4.

The catalysed reaction is hydrogencarbonate + L-glutamine + 2 ATP + H2O = carbamoyl phosphate + L-glutamate + 2 ADP + phosphate + 2 H(+). It carries out the reaction L-glutamine + H2O = L-glutamate + NH4(+). The protein operates within amino-acid biosynthesis; L-arginine biosynthesis; carbamoyl phosphate from bicarbonate: step 1/1. It participates in pyrimidine metabolism; UMP biosynthesis via de novo pathway; (S)-dihydroorotate from bicarbonate: step 1/3. Small subunit of the glutamine-dependent carbamoyl phosphate synthetase (CPSase). CPSase catalyzes the formation of carbamoyl phosphate from the ammonia moiety of glutamine, carbonate, and phosphate donated by ATP, constituting the first step of 2 biosynthetic pathways, one leading to arginine and/or urea and the other to pyrimidine nucleotides. The small subunit (glutamine amidotransferase) binds and cleaves glutamine to supply the large subunit with the substrate ammonia. The polypeptide is Carbamoyl phosphate synthase small chain (Sulfolobus acidocaldarius (strain ATCC 33909 / DSM 639 / JCM 8929 / NBRC 15157 / NCIMB 11770)).